Here is a 788-residue protein sequence, read N- to C-terminus: Protocadherin beta-18 (788 aa).

The N-terminal stretch at 1-28 (MEPGKGRAQPTRQVLLFFVFLGGSLVYS) is a signal peptide. 5 consecutive Cadherin domains span residues 29–133 (ETWS…TPTF), 134–242 (LNNH…APEF), 243–347 (EKPV…PPEI), 348–452 (AMTS…APAF), and 453–562 (TQTS…SPFV). The Extracellular segment spans residues 29–691 (ETWSYSIAEE…AQADSLTVYL (663 aa)). Asn169 carries N-linked (GlcNAc...) asparagine glycosylation. Residues Asn419 and Asn437 are each glycosylated (N-linked (GlcNAc...) asparagine). An N-linked (GlcNAc...) asparagine glycan is attached at Asn568. Residues 569–672 (GSAPCTELVP…LVDGFSQPYL (104 aa)) form the Cadherin 6 domain. The chain crosses the membrane as a helical span at residues 692 to 712 (VVALASVSSLFLFSVFLFVAV). Over 713 to 788 (RLCRRSRAAS…DSDMEKAPPF (76 aa)) the chain is Cytoplasmic.

The protein resides in the cell membrane. Functionally, potential calcium-dependent cell-adhesion protein. This is Protocadherin beta-18 (PCDHB18) from Pan troglodytes (Chimpanzee).